Here is a 357-residue protein sequence, read N- to C-terminus: tRNA-specific 2-thiouridylase MnmA (357 aa).

Residues 6–13 and Leu-32 each bind ATP; that span reads AMSGGVDS. The active-site Nucleophile is the Cys-101. A disulfide bond links Cys-101 and Cys-193. ATP is bound at residue Gly-125. Residues 143-145 are interaction with tRNA; the sequence is KDQ. The active-site Cysteine persulfide intermediate is the Cys-193.

Belongs to the MnmA/TRMU family.

Its subcellular location is the cytoplasm. It catalyses the reaction S-sulfanyl-L-cysteinyl-[protein] + uridine(34) in tRNA + AH2 + ATP = 2-thiouridine(34) in tRNA + L-cysteinyl-[protein] + A + AMP + diphosphate + H(+). Its function is as follows. Catalyzes the 2-thiolation of uridine at the wobble position (U34) of tRNA, leading to the formation of s(2)U34. The chain is tRNA-specific 2-thiouridylase MnmA from Mycolicibacterium gilvum (strain PYR-GCK) (Mycobacterium gilvum (strain PYR-GCK)).